The chain runs to 370 residues: Adaptive-response sensory kinase SasA (370 aa).

Residues 152 to 365 (MVAHELRTPL…CFYLTVPVWQ (214 aa)) enclose the Histidine kinase domain. His155 is modified (phosphohistidine; by autocatalysis).

As to quaternary structure, homooligomerizes. Interacts with KaiC. Participates in the KaiBC complex, whose core is composed of a KaiC homohexamer and 6 KaiB.

The catalysed reaction is ATP + protein L-histidine = ADP + protein N-phospho-L-histidine.. In terms of biological role, member of the two-component regulatory system SasA/RpaA involved in genome-wide circadian gene expression. One of several clock output pathways. Participates in the Kai clock protein complex, the main circadian regulator in cyanobacteria, via its interaction with KaiC. KaiC enhances the autophosphorylation activity of SasA, which then transfers its phosphate group to RpaA to activate it. In addition to its output function, recruits fold-shifted KaiB (KaiB(fs)) to KaiC to cooperatively form the KaiB(6):KaiC(6) complex (independent of SasA kinase activity). Required for robustness of the circadian rhythm of gene expression and is involved in clock output, also required for adaptation to light/dark cycles. This chain is Adaptive-response sensory kinase SasA, found in Prochlorococcus marinus (strain MIT 9313).